Here is a 705-residue protein sequence, read N- to C-terminus: Elongation factor G (705 aa).

The region spanning 8-290 is the tr-type G domain; the sequence is ERYRNFGIMA…GVVHLLPSPA (283 aa). GTP-binding positions include 17–24, 88–92, and 142–145; these read AHIDAGKT, DTPGH, and NKMD. Residues 290-309 are disordered; sequence ADRPPVQGIDEDEKEDTRAA.

This sequence belongs to the TRAFAC class translation factor GTPase superfamily. Classic translation factor GTPase family. EF-G/EF-2 subfamily.

Its subcellular location is the cytoplasm. Its function is as follows. Catalyzes the GTP-dependent ribosomal translocation step during translation elongation. During this step, the ribosome changes from the pre-translocational (PRE) to the post-translocational (POST) state as the newly formed A-site-bound peptidyl-tRNA and P-site-bound deacylated tRNA move to the P and E sites, respectively. Catalyzes the coordinated movement of the two tRNA molecules, the mRNA and conformational changes in the ribosome. The polypeptide is Elongation factor G (Xanthomonas euvesicatoria pv. vesicatoria (strain 85-10) (Xanthomonas campestris pv. vesicatoria)).